Consider the following 204-residue polypeptide: Glycerol-3-phosphate acyltransferase (204 aa).

5 helical membrane-spanning segments follow: residues 12 to 32 (LVMG…HWLA), 85 to 105 (WQVA…WLGW), 117 to 137 (MLLG…LTVL), 142 to 162 (IVSL…ILRF), and 163 to 183 (QGNS…MVVW).

Belongs to the PlsY family. As to quaternary structure, probably interacts with PlsX.

The protein localises to the cell inner membrane. The enzyme catalyses an acyl phosphate + sn-glycerol 3-phosphate = a 1-acyl-sn-glycero-3-phosphate + phosphate. Its pathway is lipid metabolism; phospholipid metabolism. In terms of biological role, catalyzes the transfer of an acyl group from acyl-phosphate (acyl-PO(4)) to glycerol-3-phosphate (G3P) to form lysophosphatidic acid (LPA). This enzyme utilizes acyl-phosphate as fatty acyl donor, but not acyl-CoA or acyl-ACP. In Prochlorococcus marinus (strain MIT 9313), this protein is Glycerol-3-phosphate acyltransferase.